We begin with the raw amino-acid sequence, 960 residues long: Ran GTPase-activating protein 2 (960 aa).

LRR repeat units lie at residues 69–92 (HLNL…LIAE), 132–156 (GCRL…LYNF), 162–185 (LYSL…VGKA), 227–254 (LGTL…AFRM), and 313–340 (RDCL…CFNS). The disordered stretch occupies residues 370 to 408 (NIDFGRRGDDELLSSDEEEEQGAEDASMEEDAFNTSRET). Positions 380–401 (ELLSSDEEEEQGAEDASMEEDA) are enriched in acidic residues. LRR repeat units follow at residues 475–498 (ASSM…VIAK), 538–561 (GCKI…ALKD), 568–595 (SFSL…LTEC), and 663–685 (NRNL…KALA). Residues 777–819 (PENVNVGDEDDDLGSLDGDQEEYNSKSSDSEDADLDDDDEDDD) are disordered. 2 stretches are compositionally biased toward acidic residues: residues 783-798 (GDED…DQEE) and 806-819 (SEDA…EDDD).

It is found in the nucleus. In terms of biological role, GTPase system comprising ran-1, ran-2 and ran-3 is essential in nucleocytoplasmic trafficking. Ran-2 is a GTPase activator for the nuclear RAS-related regulatory protein Ran, converting it to the putatively inactive GDP-bound state. Required for correct chromosome alignment and segregation on the metaphase plate. This Caenorhabditis elegans protein is Ran GTPase-activating protein 2 (ran-2).